The sequence spans 59 residues: Large ribosomal subunit protein uL30 (59 aa).

The protein belongs to the universal ribosomal protein uL30 family. Part of the 50S ribosomal subunit.

This Brachyspira hyodysenteriae (strain ATCC 49526 / WA1) protein is Large ribosomal subunit protein uL30.